Consider the following 774-residue polypeptide: Protein translocase subunit SecA 2 (774 aa).

ATP contacts are provided by residues glutamine 94, 112–116 (GEGKT), and aspartate 501.

Belongs to the SecA family. Monomer and homodimer. Part of the essential Sec protein translocation apparatus which comprises SecA, SecYEG and auxiliary proteins SecDF. Other proteins may also be involved.

The protein resides in the cell membrane. It localises to the cytoplasm. The enzyme catalyses ATP + H2O + cellular proteinSide 1 = ADP + phosphate + cellular proteinSide 2.. Its function is as follows. Part of the Sec protein translocase complex. Interacts with the SecYEG preprotein conducting channel. Has a central role in coupling the hydrolysis of ATP to the transfer of proteins into and across the cell membrane, serving as an ATP-driven molecular motor driving the stepwise translocation of polypeptide chains across the membrane. This Mycobacterium sp. (strain JLS) protein is Protein translocase subunit SecA 2.